Consider the following 458-residue polypeptide: Transmembrane protein adipocyte-associated 1 homolog (458 aa).

N-linked (GlcNAc...) asparagine glycosylation is found at asparagine 21 and asparagine 45. 7 consecutive transmembrane segments (helical) span residues 81–101, 114–134, 152–172, 181–201, 225–245, 263–283, and 291–311; these read VILV…GSVI, AFTL…AYSM, IIIK…GLLF, ILIA…VQVI, FLFW…IMCL, LIYC…AALI, and LCFV…IIYF. Residues asparagine 323 and asparagine 324 are each glycosylated (N-linked (GlcNAc...) asparagine). A disordered region spans residues 409–458; it reads RTGSDDYAHHRDSMLSEPSTGTTTRHLKGLGPQGSLVFEDDPSSLTSLRM. The segment covering 411 to 422 has biased composition (basic and acidic residues); sequence GSDDYAHHRDSM.

The protein belongs to the UPF0359 family.

It is found in the membrane. This chain is Transmembrane protein adipocyte-associated 1 homolog (tpra-1), found in Caenorhabditis elegans.